We begin with the raw amino-acid sequence, 628 residues long: Very-long-chain aldehyde decarbonylase GL1-2 (628 aa).

The next 5 helical transmembrane spans lie at 37–57 (GAAP…ARGL), 131–151 (GWAI…YWAH), 191–211 (VVIG…VGLV), 299–319 (DFVF…PFVL), and 331–351 (FVLL…WCCS). The region spanning 137–277 (LLHVLVAEPL…MPIFDLLGGT (141 aa)) is the Fatty acid hydroxylase domain.

The protein belongs to the sterol desaturase family. In terms of assembly, homodimer.

The protein localises to the endoplasmic reticulum membrane. The catalysed reaction is a long-chain fatty aldehyde + 2 NADPH + O2 + H(+) = a long-chain alkane + formate + 2 NADP(+) + H2O. Aldehyde decarbonylase involved in the conversion of aldehydes to alkanes. Core component of a very-long-chain alkane synthesis complex. In Oryza sativa subsp. indica (Rice), this protein is Very-long-chain aldehyde decarbonylase GL1-2.